Consider the following 370-residue polypeptide: Histidinol-phosphate aminotransferase (370 aa).

N6-(pyridoxal phosphate)lysine is present on lysine 223.

It belongs to the class-II pyridoxal-phosphate-dependent aminotransferase family. Histidinol-phosphate aminotransferase subfamily. In terms of assembly, homodimer. Pyridoxal 5'-phosphate serves as cofactor.

It carries out the reaction L-histidinol phosphate + 2-oxoglutarate = 3-(imidazol-4-yl)-2-oxopropyl phosphate + L-glutamate. The protein operates within amino-acid biosynthesis; L-histidine biosynthesis; L-histidine from 5-phospho-alpha-D-ribose 1-diphosphate: step 7/9. The chain is Histidinol-phosphate aminotransferase from Methylobacterium sp. (strain 4-46).